Reading from the N-terminus, the 1427-residue chain is Protein expanded (1427 aa).

The 374-residue stretch at 26-399 folds into the FERM domain; it reads RFLALRLLGQ…DTHQWSMKLA (374 aa). Positions 176-212 are disordered; it reads GDAPPGTSNSKDDSGEETSASPSNGGRGLSATTTLPK. Polar residues predominate over residues 192–211; that stretch reads ETSASPSNGGRGLSATTTLP. Phosphotyrosine is present on residues Y227 and Y423. Disordered stretches follow at residues 520–566 and 611–656; these read VRPQ…IGSQ and NSAL…SGVY. A compositionally biased stretch (polar residues) spans 524–544; sequence DASSNGATIVTNSSVQRNSMG. The span at 545-559 shows a compositional bias: low complexity; that stretch reads TTANDSSTATDSPSS. Y679 is modified (phosphotyrosine). Positions 688 to 710 are enriched in basic and acidic residues; it reads EETHVQHSDSVDGKKKEDFRPRS. 5 disordered regions span residues 688 to 732, 766 to 792, 815 to 880, 939 to 963, and 1000 to 1022; these read EETH…DNKH, YVTL…YSAR, APKP…SLKS, HNSN…HRHS, and LAPP…HPHL. Y766 is modified (phosphotyrosine). The segment covering 818–838 has biased composition (pro residues); sequence PDSPPCSPPVPPAPIPAPPPA. Positions 842–847 match the RXPPXY motif motif; that stretch reads RDPPPY. The span at 848-859 shows a compositional bias: polar residues; the sequence is SISSKPRPTSLI. Over residues 860–877 the composition is skewed to low complexity; sequence SVSSSAHPAPSAAGSMSS. Over residues 951–963 the composition is skewed to basic residues; sequence LHHHHVPSHHRHS. Residues 1001–1019 show a composition bias toward pro residues; that stretch reads APPPPSLPRQPPPPPPPNH. The SH3-binding motif lies at 1008-1020; the sequence is PRQPPPPPPPNHP. Y1103 is subject to Phosphotyrosine. Residues 1149 to 1157 carry the SH3-binding motif; that stretch reads PPPPPPLHP. Residue S1181 is modified to Phosphoserine. 2 disordered regions span residues 1190 to 1267 and 1345 to 1398; these read DLLP…WAGE and TGQE…LPVQ. Composition is skewed to pro residues over residues 1214 to 1230 and 1237 to 1246; these read PPMP…PSKP and PIPPRKPPTL. 2 stretches are compositionally biased toward polar residues: residues 1253–1262 and 1345–1370; these read SPLTKTSSGA and TGQE…SSAG. Residues 1376 to 1388 show a composition bias toward basic residues; that stretch reads KARKGSTVSHRHP.

In terms of assembly, forms a complex with Kibra and Mer. Interacts (via RXPPXY motif) with Kibra (via domain WW 1). Interacts with Mer and Hpo (via SARAH domain). Interacts with Schip1; the interaction results in recruitment of Schip1 to the apical cell membrane. Interacts with ack and yki. Phosphorylated by Ack at several tyrosines including Tyr-227, Tyr-423, Tyr-679, Tyr-766 and Tyr-1103.

Its subcellular location is the apical cell membrane. Functionally, activates the Hippo/SWH (Sav/Wts/Hpo) signaling pathway, a signaling pathway that plays a pivotal role in organ size control and tumor suppression by restricting proliferation and promoting apoptosis. The core of this pathway is composed of a kinase cascade wherein Hippo (Hpo), in complex with its regulatory protein Salvador (Sav), phosphorylates and activates Warts (Wts) in complex with its regulatory protein Mats, which in turn phosphorylates and inactivates the Yorkie (Yki) oncoprotein. Ex acts synergistically along with Mer and Kibra to regulate the Hippo signaling pathway. Involved in the control of cell proliferation in imaginal disks. May bind to certain proteins of signal transduction pathways by interaction with their SH3 domains. Required for apical localization of Schip1. This is Protein expanded (ex) from Drosophila melanogaster (Fruit fly).